We begin with the raw amino-acid sequence, 466 residues long: Ceramide glucosyltransferase 1 (466 aa).

A helical transmembrane segment spans residues 70–90 (LALSGCIFVSVLYLVHIIAFF). Residue D148 is a short sequence motif, D1. D200 is a short sequence motif (D2). A short sequence motif (D3) is located at residue D294. Catalysis depends on D294, which acts as the Proton acceptor. The (Q/R)XXRW signature appears at 330-334 (RIGRW). The next 2 helical transmembrane spans lie at 354–374 (CVTS…YSVY) and 403–423 (TPFL…FIFI).

It belongs to the glycosyltransferase 2 family. Expressed in excretory canals, pharyngeal intestinal valve, intestine and intestinal rectal valve.

The protein resides in the membrane. It carries out the reaction an N-acylsphing-4-enine + UDP-alpha-D-glucose = a beta-D-glucosyl-(1&lt;-&gt;1')-N-acylsphing-4-enine + UDP + H(+). It catalyses the reaction an N-acyl-15-methylhexadecasphing-4-enine + UDP-alpha-D-glucose = an N-acyl-1-beta-D-glucosyl-15-methylhexadecasphing-4-enine + UDP + H(+). It participates in lipid metabolism; sphingolipid metabolism. Functionally, catalyzes the first glycosylation step in glycosphingolipid biosynthesis, the transfer of glucose to ceramide to produce glucosylceramides (GlcCer). GlcCer are known to contribute to the physical properties and physiological functions of membranes and may regulate signal transduction. Only branched-chain sphingoid bases like 15-methylhexadecasphing-4-enine are used for generating complex sphingolipids in Caenorhabditis elegans. Together with cgt-3, plays a role in the trafficking of proteins such as mig-14 to the cell membrane in intestinal cells. The chain is Ceramide glucosyltransferase 1 from Caenorhabditis elegans.